The following is a 198-amino-acid chain: MLAETLILASLSSYRAQLLKKAGLNFFVKGASFDEREVEKTGKTKNPKELSCFLASAKAKNVSERFPEALVIGCDQILDLEGQVFHKVKSIEEAHQRLCILSGKIHSLHSAVALFQNGQEIWVEAFSAHMSVRPLSSEFIERYLARVETDILNSVGVYQIEGEGIHLFEKIEGDFFTIIGLPLLPLLIKLRHFEVIDG.

Residue aspartate 75 is the Proton acceptor of the active site.

The protein belongs to the Maf family. YceF subfamily. It depends on a divalent metal cation as a cofactor.

The protein localises to the cytoplasm. It catalyses the reaction N(7)-methyl-GTP + H2O = N(7)-methyl-GMP + diphosphate + H(+). Nucleoside triphosphate pyrophosphatase that hydrolyzes 7-methyl-GTP (m(7)GTP). May have a dual role in cell division arrest and in preventing the incorporation of modified nucleotides into cellular nucleic acids. In Bartonella henselae (strain ATCC 49882 / DSM 28221 / CCUG 30454 / Houston 1) (Rochalimaea henselae), this protein is 7-methyl-GTP pyrophosphatase.